A 121-amino-acid chain; its full sequence is Large ribosomal subunit protein uL18 (121 aa).

It belongs to the universal ribosomal protein uL18 family. In terms of assembly, part of the 50S ribosomal subunit; part of the 5S rRNA/L5/L18/L25 subcomplex. Contacts the 5S and 23S rRNAs.

Its function is as follows. This is one of the proteins that bind and probably mediate the attachment of the 5S RNA into the large ribosomal subunit, where it forms part of the central protuberance. This is Large ribosomal subunit protein uL18 from Mesomycoplasma hyopneumoniae (strain J / ATCC 25934 / NCTC 10110) (Mycoplasma hyopneumoniae).